The chain runs to 409 residues: Arginine deiminase (409 aa).

Residue Cys399 is the Amidino-cysteine intermediate of the active site.

The protein belongs to the arginine deiminase family.

It localises to the cytoplasm. It carries out the reaction L-arginine + H2O = L-citrulline + NH4(+). It participates in amino-acid degradation; L-arginine degradation via ADI pathway; carbamoyl phosphate from L-arginine: step 1/2. In Streptococcus pneumoniae (strain 70585), this protein is Arginine deiminase.